The primary structure comprises 123 residues: Small ribosomal subunit protein uS13 (123 aa).

This sequence belongs to the universal ribosomal protein uS13 family. As to quaternary structure, part of the 30S ribosomal subunit. Forms a loose heterodimer with protein S19. Forms two bridges to the 50S subunit in the 70S ribosome.

In terms of biological role, located at the top of the head of the 30S subunit, it contacts several helices of the 16S rRNA. In the 70S ribosome it contacts the 23S rRNA (bridge B1a) and protein L5 of the 50S subunit (bridge B1b), connecting the 2 subunits; these bridges are implicated in subunit movement. Contacts the tRNAs in the A and P-sites. The protein is Small ribosomal subunit protein uS13 of Neorickettsia sennetsu (strain ATCC VR-367 / Miyayama) (Ehrlichia sennetsu).